A 472-amino-acid chain; its full sequence is 4-aminobutyrate aminotransferase (472 aa).

Position 135 to 136 (135 to 136) interacts with pyridoxal 5'-phosphate; that stretch reads GA. Arginine 193 contacts substrate. Lysine 327 is modified (N6-(pyridoxal phosphate)lysine). Threonine 352 is a binding site for pyridoxal 5'-phosphate.

It belongs to the class-III pyridoxal-phosphate-dependent aminotransferase family. Homodimer and homotetramer. Pyridoxal 5'-phosphate is required as a cofactor.

The protein localises to the cytoplasm. The enzyme catalyses 4-aminobutanoate + 2-oxoglutarate = succinate semialdehyde + L-glutamate. The protein operates within amino-acid degradation; L-arginine degradation. Required for the degradation of gamma-aminobutyric acid (GABA), which is important for utilization of GABA as nitrogen source and for oxidative stress tolerance. Deaminates GABA to succinate semialdehyde, which in turn is converted to succinate by the succinate-semialdehyde dehydrogenase UGA2. May be involved in an alternative, arginase-independent arginine degradation pathway via GABA. The sequence is that of 4-aminobutyrate aminotransferase from Kluyveromyces lactis (strain ATCC 8585 / CBS 2359 / DSM 70799 / NBRC 1267 / NRRL Y-1140 / WM37) (Yeast).